Reading from the N-terminus, the 354-residue chain is UDP-N-acetylglucosamine--N-acetylmuramyl-(pentapeptide) pyrophosphoryl-undecaprenol N-acetylglucosamine transferase (354 aa).

UDP-N-acetyl-alpha-D-glucosamine contacts are provided by residues 15-17 (TGG), Asn127, Arg163, Ser191, Ile244, 263-268 (ALTVSE), and Gln288.

This sequence belongs to the glycosyltransferase 28 family. MurG subfamily.

The protein resides in the cell inner membrane. The enzyme catalyses di-trans,octa-cis-undecaprenyl diphospho-N-acetyl-alpha-D-muramoyl-L-alanyl-D-glutamyl-meso-2,6-diaminopimeloyl-D-alanyl-D-alanine + UDP-N-acetyl-alpha-D-glucosamine = di-trans,octa-cis-undecaprenyl diphospho-[N-acetyl-alpha-D-glucosaminyl-(1-&gt;4)]-N-acetyl-alpha-D-muramoyl-L-alanyl-D-glutamyl-meso-2,6-diaminopimeloyl-D-alanyl-D-alanine + UDP + H(+). It participates in cell wall biogenesis; peptidoglycan biosynthesis. Cell wall formation. Catalyzes the transfer of a GlcNAc subunit on undecaprenyl-pyrophosphoryl-MurNAc-pentapeptide (lipid intermediate I) to form undecaprenyl-pyrophosphoryl-MurNAc-(pentapeptide)GlcNAc (lipid intermediate II). The chain is UDP-N-acetylglucosamine--N-acetylmuramyl-(pentapeptide) pyrophosphoryl-undecaprenol N-acetylglucosamine transferase from Vibrio cholerae serotype O1 (strain ATCC 39315 / El Tor Inaba N16961).